Here is a 256-residue protein sequence, read N- to C-terminus: Ubiquinone/menaquinone biosynthesis C-methyltransferase UbiE (256 aa).

The span at 1-12 (MNDQRKGEHAEP) shows a compositional bias: basic and acidic residues. The segment at 1-21 (MNDQRKGEHAEPTTHFGYQDV) is disordered. Residues Thr-79, Asp-100, and 128 to 129 (DA) contribute to the S-adenosyl-L-methionine site.

This sequence belongs to the class I-like SAM-binding methyltransferase superfamily. MenG/UbiE family.

It catalyses the reaction a 2-demethylmenaquinol + S-adenosyl-L-methionine = a menaquinol + S-adenosyl-L-homocysteine + H(+). The enzyme catalyses a 2-methoxy-6-(all-trans-polyprenyl)benzene-1,4-diol + S-adenosyl-L-methionine = a 5-methoxy-2-methyl-3-(all-trans-polyprenyl)benzene-1,4-diol + S-adenosyl-L-homocysteine + H(+). Its pathway is quinol/quinone metabolism; menaquinone biosynthesis; menaquinol from 1,4-dihydroxy-2-naphthoate: step 2/2. It functions in the pathway cofactor biosynthesis; ubiquinone biosynthesis. Methyltransferase required for the conversion of demethylmenaquinol (DMKH2) to menaquinol (MKH2) and the conversion of 2-polyprenyl-6-methoxy-1,4-benzoquinol (DDMQH2) to 2-polyprenyl-3-methyl-6-methoxy-1,4-benzoquinol (DMQH2). The polypeptide is Ubiquinone/menaquinone biosynthesis C-methyltransferase UbiE (Pseudomonas putida (strain W619)).